The primary structure comprises 333 residues: NADH-quinone oxidoreductase subunit H (333 aa).

8 helical membrane-spanning segments follow: residues 17–37 (IFFAIGVGLLLVVLGFVTYGI), 88–108 (FILAPVIAFAPAFMVLAALPF), 117–137 (IGVGLLYYIAVSGLTTIGVVT), 159–179 (ISYEVPLVMSVIGVILLSGSL), 191–211 (VWFIVVQPIGFLVFLIAAVAE), 241–261 (FFMLAEYVYFFAMAALTTVLF), 273–293 (FIPGAVWFALKFSLVVFLFIW), and 313–333 (VLLPVALVNIFVTALVKQLFF).

Belongs to the complex I subunit 1 family. As to quaternary structure, NDH-1 is composed of 14 different subunits. Subunits NuoA, H, J, K, L, M, N constitute the membrane sector of the complex.

The protein resides in the cell membrane. The enzyme catalyses a quinone + NADH + 5 H(+)(in) = a quinol + NAD(+) + 4 H(+)(out). In terms of biological role, NDH-1 shuttles electrons from NADH, via FMN and iron-sulfur (Fe-S) centers, to quinones in the respiratory chain. The immediate electron acceptor for the enzyme in this species is believed to be ubiquinone. Couples the redox reaction to proton translocation (for every two electrons transferred, four hydrogen ions are translocated across the cytoplasmic membrane), and thus conserves the redox energy in a proton gradient. This subunit may bind ubiquinone. In Anoxybacillus flavithermus (strain DSM 21510 / WK1), this protein is NADH-quinone oxidoreductase subunit H.